A 608-amino-acid polypeptide reads, in one-letter code: Putative pentatricopeptide repeat-containing protein At1g16830 (608 aa).

13 PPR repeats span residues 107 to 141 (KPRV…GFVP), 142 to 172 (NTRA…IRFR), 173 to 210 (NFFS…GFYP), 211 to 245 (NRER…GISV), 246 to 280 (SVNV…GCSP), 281 to 315 (NLVT…GLAP), 316 to 350 (DIVL…KLVP), 351 to 381 (DQYT…IGTD), 383 to 417 (DLVT…DFAL), 418 to 452 (DCYT…KKHL), 453 to 487 (DAHF…KYPL), 488 to 522 (DVVS…GIYP), and 523 to 557 (NRRT…GVEL).

It belongs to the PPR family. P subfamily.

This chain is Putative pentatricopeptide repeat-containing protein At1g16830, found in Arabidopsis thaliana (Mouse-ear cress).